Here is a 1778-residue protein sequence, read N- to C-terminus: Ankyrin repeat domain-containing protein 36C (1778 aa).

5 ANK repeats span residues 64-93 (KERT…ELNL), 97-126 (EDRT…DPNI), 130-159 (FGRT…NIEE), 163-192 (DEYP…NINA), and 196-225 (LGRS…DVFS). Disordered stretches follow at residues 260–365 (LSIN…DEQK), 501–526 (ALPA…VKDS), 538–653 (DSLT…QKQS), 671–1027 (RITG…QKQL), and 1051–1072 (IRGT…EKDS). Polar residues-rich tracts occupy residues 261 to 272 (SINSNPVSSQKQ) and 297 to 306 (KSGTVSSQKQ). Residues 539–555 (SLTSSEESSERPPLSTL) are compositionally biased toward low complexity. 2 stretches are compositionally biased toward basic and acidic residues: residues 585 to 596 (PAEKATSDDKDS) and 619 to 630 (PAEKATSDEKDS). Polar residues-rich tracts occupy residues 631–653 (VSNI…QKQS) and 679–691 (GTVS…PSKA). A compositionally biased stretch (basic and acidic residues) spans 794 to 813 (TSDEKDSFSNITREKKDGEI). Ser829 is modified (phosphoserine). Basic and acidic residues-rich tracts occupy residues 840–849 (RGKEDGEKTR) and 862–881 (TSDE…DGET). Ser897 carries the phosphoserine modification. Basic and acidic residues predominate over residues 907–917 (AREKKDGEKSR). Basic residues predominate over residues 942 to 955 (RGKKHGEKTRRVSS). Polar residues-rich tracts occupy residues 983 to 992 (ISGTVSSQKQ) and 1005 to 1026 (VSNI…SQKQ). 4 coiled-coil regions span residues 1157–1187 (EQDL…QIHS), 1247–1333 (ELKD…YRIE), 1362–1480 (SETD…DHDQ), and 1544–1768 (VFEH…ILQH).

This sequence belongs to the ANKRD36 family.

The chain is Ankyrin repeat domain-containing protein 36C (ANKRD36C) from Homo sapiens (Human).